The primary structure comprises 1037 residues: Cysteine-rich motor neuron 1 protein (1037 aa).

The first 34 residues, 1–34 (MYLVAGGRGLAGCGHLSVSLLGLLLLLARSGTRA), serve as a signal peptide directing secretion. One can recognise an IGFBP N-terminal domain in the interval 35-112 (LVCLPCDESK…EYEVGVCEDE (78 aa)). Topologically, residues 35–940 (LVCLPCDESK…HPGEDSSLDS (906 aa)) are extracellular. Cystine bridges form between C37/C60, C40/C62, C45/C63, C51/C66, C74/C90, and C84/C109. The Cell attachment site signature appears at 314–316 (RGD). N-linked (GlcNAc...) asparagine glycosylation is present at N330. VWFC domains lie at 334 to 391 (PACV…PVCE) and 401 to 457 (AGCY…PVCE). Antistasin-like domains lie at 469–498 (CGEL…TCQC), 505–532 (CLGL…LCQC), 539–564 (CRPT…ICRC), and 567–592 (CPEL…ICKC). 4 VWFC domains span residues 606–663 (GTCL…PSCT), 677–735 (SICH…PQCT), 751–809 (SYCR…PYCL), and 817–874 (VVCH…PMCP). Residues 941–961 (IVSVVVPIIICLSIIIAFLLI) traverse the membrane as a helical segment. The Cytoplasmic portion of the chain corresponds to 962 to 1037 (NQKKQWVPLL…LQADNFYQTV (76 aa)). T1036 bears the Phosphothreonine mark.

As to quaternary structure, interacts with BMP4 and BMP7. Expressed during embryonic development in brain, kidney, spinal cord, testis, lens, vibrissae, pinna, tooth primordia and in specific regions of the CNS. Expressed in adult lens. Displays male-specific expression in the fetal gonads with the strongest expression in the Sertoli cells of developing testis.

The protein resides in the membrane. In terms of biological role, may play a role in CNS development by interacting with growth factors implicated in motor neuron differentiation and survival. May play a role in capillary formation and maintenance during angiogenesis. Modulates BMP activity by affecting its processing and delivery to the cell surface. This is Cysteine-rich motor neuron 1 protein (Crim1) from Mus musculus (Mouse).